The sequence spans 258 residues: tRNA pseudouridine synthase A (258 aa).

The active-site Nucleophile is Asp53. Tyr111 is a binding site for substrate.

Belongs to the tRNA pseudouridine synthase TruA family. Homodimer.

It carries out the reaction uridine(38/39/40) in tRNA = pseudouridine(38/39/40) in tRNA. Formation of pseudouridine at positions 38, 39 and 40 in the anticodon stem and loop of transfer RNAs. This is tRNA pseudouridine synthase A from Streptococcus agalactiae serotype V (strain ATCC BAA-611 / 2603 V/R).